A 1464-amino-acid chain; its full sequence is Sister chromatid cohesion protein PDS5 homolog B-B (1464 aa).

The stretch at 383–419 is one HEAT repeat; the sequence is LLVNDQLLNFVRERTLDKRWRVRKEAMMGLAQIYKKY. The tract at residues 1126-1464 is disordered; sequence KSTNVLGAVN…MKSELEGPLL (339 aa). Polar residues predominate over residues 1137–1155; sequence PLSSAGKQMQSKSSRMETV. Low complexity predominate over residues 1156 to 1168; sequence SNASSGSNPSSPG. Residues 1177-1186 show a composition bias toward acidic residues; that stretch reads TELDQIEYED. 3 stretches are compositionally biased toward basic and acidic residues: residues 1197 to 1215, 1234 to 1244, and 1265 to 1274; these read KKSDKRDDSDLLKSEVEKP, ELSKPAQEPKS, and WQEKRLKEDL. The segment covering 1286-1295 has biased composition (basic residues); it reads KKGRRGRPPK. The a.T hook 1 DNA-binding region spans 1287 to 1299; the sequence is KGRRGRPPKSAKM. Over residues 1325 to 1342 the composition is skewed to acidic residues; the sequence is PTDEEDHLEISEEQDSEN. The segment covering 1347-1357 has biased composition (basic residues); it reads RKGRGSSKKTP. Residues 1359 to 1373 show a composition bias toward polar residues; that stretch reads KSDSTDSALDTSRPT. 2 DNA-binding regions (a.T hook) span residues 1375–1387 and 1391–1403; these read QKRRGRPPKTPTV and KSHVGRPRKVVSK. Basic residues predominate over residues 1390–1400; that stretch reads KKSHVGRPRKV. Residues 1425–1435 show a composition bias toward acidic residues; sequence SNEEETADEEV. The span at 1441 to 1453 shows a compositional bias: basic residues; sequence GRRRTAKKRRWIQ. The span at 1455 to 1464 shows a compositional bias: basic and acidic residues; the sequence is MKSELEGPLL.

This sequence belongs to the PDS5 family. Interacts with the cohesin complex. Phosphorylated in mitotic cells.

Its subcellular location is the nucleus. Plays a role in androgen-induced proliferative arrest. Required for maintenance of sister chromatid cohesion during mitosis. The protein is Sister chromatid cohesion protein PDS5 homolog B-B (pds5b-b) of Xenopus laevis (African clawed frog).